The chain runs to 108 residues: RNA silencing suppressor (108 aa).

A basic region spans residues 47 to 50; that stretch reads RRRR. A C4-type zinc finger spans residues 57-78; it reads CHRCYRLWPPTVFTTRCDNKYC.

The protein belongs to the carlaviruses nucleic acid-binding protein family.

Suppressor of viral-induced RNA silencing. The potential mechanism of action is based on sequestering siRNAs. The protein is RNA silencing suppressor of Solanum tuberosum (Potato).